A 118-amino-acid polypeptide reads, in one-letter code: Putative cytochrome P450 family member 4F30 (118 aa).

Positions 1–64 (MVTPAGCLGG…GPLHILGTDG (64 aa)) are disordered. A compositionally biased stretch (polar residues) spans 28 to 43 (RAGQTGQAVSGAQVSS).

The sequence is that of Putative cytochrome P450 family member 4F30 (CYP4F30P) from Homo sapiens (Human).